A 44-amino-acid polypeptide reads, in one-letter code: Cuticle protein CP463 (44 aa).

2 consecutive repeat copies span residues 3-20 (LLEG…KKYL) and 27-44 (VLLS…NVQF).

As to expression, calcified shell.

This chain is Cuticle protein CP463, found in Cancer pagurus (Rock crab).